Reading from the N-terminus, the 135-residue chain is Small ribosomal subunit protein eS6 (135 aa).

It belongs to the eukaryotic ribosomal protein eS6 family.

The chain is Small ribosomal subunit protein eS6 from Halorubrum lacusprofundi (strain ATCC 49239 / DSM 5036 / JCM 8891 / ACAM 34).